The following is a 407-amino-acid chain: Imidazolonepropionase (407 aa).

His74 and His76 together coordinate Fe(3+). Zn(2+)-binding residues include His74 and His76. 4-imidazolone-5-propanoate-binding residues include Arg83, Tyr146, and His179. Position 146 (Tyr146) interacts with N-formimidoyl-L-glutamate. Residue His244 coordinates Fe(3+). His244 provides a ligand contact to Zn(2+). Residue Gln247 coordinates 4-imidazolone-5-propanoate. Asp319 serves as a coordination point for Fe(3+). Residue Asp319 participates in Zn(2+) binding. N-formimidoyl-L-glutamate-binding residues include Asn321 and Gly323. Thr324 provides a ligand contact to 4-imidazolone-5-propanoate.

It belongs to the metallo-dependent hydrolases superfamily. HutI family. The cofactor is Zn(2+). Fe(3+) is required as a cofactor.

The protein resides in the cytoplasm. It catalyses the reaction 4-imidazolone-5-propanoate + H2O = N-formimidoyl-L-glutamate. Its pathway is amino-acid degradation; L-histidine degradation into L-glutamate; N-formimidoyl-L-glutamate from L-histidine: step 3/3. Functionally, catalyzes the hydrolytic cleavage of the carbon-nitrogen bond in imidazolone-5-propanoate to yield N-formimidoyl-L-glutamate. It is the third step in the universal histidine degradation pathway. The protein is Imidazolonepropionase of Salmonella schwarzengrund (strain CVM19633).